The primary structure comprises 285 residues: Homeobox protein Hox-A4 (285 aa).

Disordered regions lie at residues 19–70 (PFEE…APRA) and 94–130 (ASPG…TTPA). The segment covering 27–41 (GGPGGGDGAVGGGPG) has biased composition (gly residues). Residues 44–70 (RPQSAPHLPAPNPHAARQPPAYYAPRA) are compositionally biased toward low complexity. Residues 106 to 118 (GAHPSPAPQPPVP) show a composition bias toward pro residues. The short motif at 159–164 (VYPWMK) is the Antp-type hexapeptide element. The homeobox DNA-binding region spans 180 to 239 (PKRSRTAYTRQQVLELEKEFHFNRYLTRRRRIEIAHTLCLSERQVKIWFQNRRMKWKKDH). The interval 238–285 (DHKLPNTKMRSSNTASAPAGPPGKAQTHSPHHHPHPLPGASTPIPSSI) is disordered.

The protein belongs to the Antp homeobox family. Deformed subfamily.

Its subcellular location is the nucleus. Sequence-specific transcription factor which is part of a developmental regulatory system that provides cells with specific positional identities on the anterior-posterior axis. Binds to sites in the 5'-flanking sequence of its coding region with various affinities. The consensus sequences of the high and low affinity binding sites are 5'-TAATGA[CG]-3' and 5'-CTAATTTT-3'. This is Homeobox protein Hox-A4 (Hoxa4) from Mus musculus (Mouse).